Consider the following 220-residue polypeptide: Deoxyribose-phosphate aldolase (220 aa).

The active-site Proton donor/acceptor is the Asp-89. Lys-151 acts as the Schiff-base intermediate with acetaldehyde in catalysis. Residue Lys-180 is the Proton donor/acceptor of the active site.

Belongs to the DeoC/FbaB aldolase family. DeoC type 1 subfamily.

Its subcellular location is the cytoplasm. It catalyses the reaction 2-deoxy-D-ribose 5-phosphate = D-glyceraldehyde 3-phosphate + acetaldehyde. It functions in the pathway carbohydrate degradation; 2-deoxy-D-ribose 1-phosphate degradation; D-glyceraldehyde 3-phosphate and acetaldehyde from 2-deoxy-alpha-D-ribose 1-phosphate: step 2/2. Catalyzes a reversible aldol reaction between acetaldehyde and D-glyceraldehyde 3-phosphate to generate 2-deoxy-D-ribose 5-phosphate. In Staphylococcus epidermidis (strain ATCC 35984 / DSM 28319 / BCRC 17069 / CCUG 31568 / BM 3577 / RP62A), this protein is Deoxyribose-phosphate aldolase.